The following is a 339-amino-acid chain: Anthranilate phosphoribosyltransferase (339 aa).

5-phospho-alpha-D-ribose 1-diphosphate is bound by residues G81, 84–85 (GD), S89, 91–94 (NVST), 109–117 (KHGNRALSS), and A121. G81 lines the anthranilate pocket. Residue S93 participates in Mg(2+) binding. N112 serves as a coordination point for anthranilate. Residue R167 participates in anthranilate binding. Mg(2+)-binding residues include D226 and E227.

This sequence belongs to the anthranilate phosphoribosyltransferase family. As to quaternary structure, homodimer. Requires Mg(2+) as cofactor.

The enzyme catalyses N-(5-phospho-beta-D-ribosyl)anthranilate + diphosphate = 5-phospho-alpha-D-ribose 1-diphosphate + anthranilate. It participates in amino-acid biosynthesis; L-tryptophan biosynthesis; L-tryptophan from chorismate: step 2/5. In terms of biological role, catalyzes the transfer of the phosphoribosyl group of 5-phosphorylribose-1-pyrophosphate (PRPP) to anthranilate to yield N-(5'-phosphoribosyl)-anthranilate (PRA). The chain is Anthranilate phosphoribosyltransferase from Rhodopseudomonas palustris (strain BisB18).